We begin with the raw amino-acid sequence, 208 residues long: Translation initiation factor IF-3 (208 aa).

Belongs to the IF-3 family. Monomer.

Its subcellular location is the cytoplasm. Its function is as follows. IF-3 binds to the 30S ribosomal subunit and shifts the equilibrium between 70S ribosomes and their 50S and 30S subunits in favor of the free subunits, thus enhancing the availability of 30S subunits on which protein synthesis initiation begins. In Parabacteroides distasonis (strain ATCC 8503 / DSM 20701 / CIP 104284 / JCM 5825 / NCTC 11152), this protein is Translation initiation factor IF-3.